The sequence spans 1116 residues: MYGSARSVGKVEPSSQSPGRSPRLPRSPRLGHRRTNSTGGSSGSSVGGGSGKTLSMENIQSLNAAYATSGPMYLSDHENVGSETPKSTMTLGRSGGRLPYGVRMTAMGSSPNIASSGVASDTIAFGEHHLPPVSMASTVPHSLRQARDNTIMDLQTQLKEVLRENDLLRKDVEVKESKLSSSMNSIKTFWSPELKKERALRKDEASKITIWKEQYRVVQEENQHMQMTIQALQDELRIQRDLNQLFQQDSSSRTGEPCVAELTEENFQRLHAEHERQAKELFLLRKTLEEMELRIETQKQTLNARDESIKKLLEMLQSKGLSAKATEEDHERTRRLAEAEMHVHHLESLLEQKEKENSMLREEMHRRFENAPDSAKTKALQTVIEMKDSKISSMERGLRDLEEEIQMLKSNGALSTEEREEEMKQMEVYRSHSKFMKNKVEQLKEELSSKEAQWEELKKKAAGLQAEIGQVKQELSRKDTELLALQTKLETLTNQFSDSKQHIEVLKESLTAKEQRAAILQTEVDALRLRLEEKETMLNKKTKQIQDMAEEKGTQAGEIHDLKDMLDVKERKVNVLQKKIENLQEQLRDKEKQMSSLKERVKSLQADTTNTDTALTTLEEALAEKERTIERLKEQRDRDEREKQEEIDNYKKDLKDLKEKVSLLQGDLSEKEASLLDLKEHASSLASSGLKKDSRLKTLEIALEQKKEECLKMESQLKKAHEAALEARASPEMSDRIQHLEREITRYKDESSKAQAEVDRLLEILKEVENEKNDKDKKIAELERQVKDQNKKVANLKHKEQVEKKKSAQMLEEARRREDNLNDSSQQLQDSLRKKDDRIEELEEALRESVQITAEREMVLAQEESARTNAEKQVEELLMAMEKVKQELESMKAKLSSTQQSLAEKETHLTNLRAERRKHLEEVLEMKQEALLAAISEKDANIALLELSSSKKKTQEEVAALKREKDRLVQQLKQQTQNRMKLMADNYEDDHFKSSHSNQTNHKPSPDQIIQPLLELDQNRSKLKLYIGHLTTLCHDRDPLILRGLTPPASYNLDDDQAAWENELQKMTRGQLQDELEKGERDNAELQEFANAILQQIADHCPDILEQVVNALEESS.

Positions 1-54 (MYGSARSVGKVEPSSQSPGRSPRLPRSPRLGHRRTNSTGGSSGSSVGGGSGKTL) are disordered. Residue K10 is modified to N6-acetyllysine. The span at 13-28 (PSSQSPGRSPRLPRSP) shows a compositional bias: low complexity. A phosphoserine mark is found at S17, S21, and S37. The residue at position 38 (T38) is a Phosphothreonine. Residues 40-51 (GSSGSSVGGGSG) show a composition bias toward gly residues. 3 positions are modified to phosphoserine: S55, S75, and S94. The stretch at 144-988 (RQARDNTIMD…RMKLMADNYE (845 aa)) forms a coiled coil. Positions 590–602 (KEKQMSSLKERVK) are enriched in basic and acidic residues. Disordered stretches follow at residues 590-609 (KEKQ…ADTT) and 814-836 (ARRR…RKKD). S1005 carries the phosphoserine modification. T1046 is modified (phosphothreonine). In terms of domain architecture, FIP-RBD spans 1046–1108 (TPPASYNLDD…DHCPDILEQV (63 aa)). Positions 1060–1100 (WENELQKMTRGQLQDELEKGERDNAELQEFANAILQQIADH) form a coiled coil.

Part of a complex with CHUK, IKBKB and IKBKG. Interacts with CHUK, IKBKB and IKBKG. The interaction with IKBKG is independent of CHUK and IKBKB. Interacts with NFKBIA. Isoform 4 interacts with PPFIA1, and through its C-terminus with the PDZ domains of RIMS1 and RIMS2. Interacts with ERC2/CAST1. Interacts with the GTB-bound forms of RAB6A isoform 1 and isoform 2 and with RAB6B. The interaction was strongest with RAB6B, followed by RAB6A isoform 2 and weakest with RAB6A isoform 1. Interacts with SDCCAG8. Part of a cortical microtubule stabilization complex (CMSC) composed of KANK1, PPFIA1, PPFIBP1, ERC1/ELKS, PHLDB2/LL5beta, CLASPs, KIF21A and possibly additional interactors; within CMSCs KANK1 and PHLDB2/LL5beta appear to be the core components for targeting of microtubule-binding proteins KIF21A and CLASPs, whereas PPFIA1, PPFIBP1 and ERC1/ELKS serve as scaffolds for protein clustering. As to expression, widely expressed. Isoform 2 and isoform 4 are abundantly expressed in brain. Isoform 1 and isoform 3 are predominantly expressed in testis and thyroid, and isoform 1 predominates in other tissues tested.

The protein localises to the cytoplasm. It is found in the cytoskeleton. It localises to the microtubule organizing center. The protein resides in the centrosome. Its subcellular location is the membrane. The protein localises to the golgi apparatus membrane. It is found in the presynaptic cell membrane. It localises to the cell projection. The protein resides in the podosome. Functionally, regulatory subunit of the IKK complex. Probably recruits IkappaBalpha/NFKBIA to the complex. May be involved in the organization of the cytomatrix at the nerve terminals active zone (CAZ) which regulates neurotransmitter release. May be involved in vesicle trafficking at the CAZ. May be involved in Rab-6 regulated endosomes to Golgi transport. This Homo sapiens (Human) protein is ELKS/Rab6-interacting/CAST family member 1 (ERC1).